We begin with the raw amino-acid sequence, 272 residues long: 2,3,4,5-tetrahydropyridine-2,6-dicarboxylate N-succinyltransferase (272 aa).

Substrate-binding residues include Arg-104 and Asp-141.

It belongs to the transferase hexapeptide repeat family. As to quaternary structure, homotrimer.

Its subcellular location is the cytoplasm. The enzyme catalyses (S)-2,3,4,5-tetrahydrodipicolinate + succinyl-CoA + H2O = (S)-2-succinylamino-6-oxoheptanedioate + CoA. It functions in the pathway amino-acid biosynthesis; L-lysine biosynthesis via DAP pathway; LL-2,6-diaminopimelate from (S)-tetrahydrodipicolinate (succinylase route): step 1/3. The polypeptide is 2,3,4,5-tetrahydropyridine-2,6-dicarboxylate N-succinyltransferase (Dechloromonas aromatica (strain RCB)).